Reading from the N-terminus, the 344-residue chain is Methylthioribose-1-phosphate isomerase (344 aa).

Substrate contacts are provided by residues 46–48 (RGA), arginine 89, and glutamine 196. The Proton donor role is filled by aspartate 237. 247-248 (NK) lines the substrate pocket.

Belongs to the eIF-2B alpha/beta/delta subunits family. MtnA subfamily.

It carries out the reaction 5-(methylsulfanyl)-alpha-D-ribose 1-phosphate = 5-(methylsulfanyl)-D-ribulose 1-phosphate. It participates in amino-acid biosynthesis; L-methionine biosynthesis via salvage pathway; L-methionine from S-methyl-5-thio-alpha-D-ribose 1-phosphate: step 1/6. Its function is as follows. Catalyzes the interconversion of methylthioribose-1-phosphate (MTR-1-P) into methylthioribulose-1-phosphate (MTRu-1-P). The sequence is that of Methylthioribose-1-phosphate isomerase from Syntrophotalea carbinolica (strain DSM 2380 / NBRC 103641 / GraBd1) (Pelobacter carbinolicus).